Reading from the N-terminus, the 202-residue chain is Small ribosomal subunit protein uS4 (202 aa).

The segment at 16 to 42 (GELPGLSRKNPRRAYPPGQHGQARKKR) is disordered. The S4 RNA-binding domain occupies 90-151 (MRLDNTVFRL…QERSRRLVEA (62 aa)).

It belongs to the universal ribosomal protein uS4 family. In terms of assembly, part of the 30S ribosomal subunit. Contacts protein S5. The interaction surface between S4 and S5 is involved in control of translational fidelity.

Its function is as follows. One of the primary rRNA binding proteins, it binds directly to 16S rRNA where it nucleates assembly of the body of the 30S subunit. In terms of biological role, with S5 and S12 plays an important role in translational accuracy. This is Small ribosomal subunit protein uS4 from Rippkaea orientalis (strain PCC 8801 / RF-1) (Cyanothece sp. (strain PCC 8801)).